Here is a 148-residue protein sequence, read N- to C-terminus: Lysozyme C-3 (148 aa).

The N-terminal stretch at 1-18 (MKTLLVLALLLLSVSVQA) is a signal peptide. Residues 19–148 (KVYDRCEFAR…VSQYIRGCKL (130 aa)) form the C-type lysozyme domain. Cystine bridges form between Cys-24–Cys-146, Cys-48–Cys-134, Cys-83–Cys-99, and Cys-95–Cys-113. Residues Glu-53 and Asp-71 contribute to the active site.

This sequence belongs to the glycosyl hydrolase 22 family. As to quaternary structure, monomer.

It is found in the secreted. The catalysed reaction is Hydrolysis of (1-&gt;4)-beta-linkages between N-acetylmuramic acid and N-acetyl-D-glucosamine residues in a peptidoglycan and between N-acetyl-D-glucosamine residues in chitodextrins.. Functionally, lysozymes have primarily a bacteriolytic function; those in tissues and body fluids are associated with the monocyte-macrophage system and enhance the activity of immunoagents. The polypeptide is Lysozyme C-3 (Sus scrofa (Pig)).